The chain runs to 357 residues: Sulfate/thiosulfate import ATP-binding protein CysA (357 aa).

The ABC transporter domain maps to 3 to 237 (ITIQNLNKHF…PENAFVTEFL (235 aa)). 35–42 (GPSGCGKT) lines the ATP pocket.

The protein belongs to the ABC transporter superfamily. Sulfate/tungstate importer (TC 3.A.1.6) family. In terms of assembly, the complex is composed of two ATP-binding proteins (CysA), two transmembrane proteins (CysT and CysW) and a solute-binding protein (CysP).

It is found in the cell inner membrane. It catalyses the reaction sulfate(out) + ATP + H2O = sulfate(in) + ADP + phosphate + H(+). It carries out the reaction thiosulfate(out) + ATP + H2O = thiosulfate(in) + ADP + phosphate + H(+). Functionally, part of the ABC transporter complex CysAWTP involved in sulfate/thiosulfate import. Responsible for energy coupling to the transport system. The polypeptide is Sulfate/thiosulfate import ATP-binding protein CysA (Neisseria meningitidis serogroup B (strain ATCC BAA-335 / MC58)).